We begin with the raw amino-acid sequence, 145 residues long: Cuticle protein 65 (145 aa).

Repeat copies occupy residues 27–30 (AAPA), 33–37 (AAPAV), 39–42 (AAPA), 86–89 (AAPV), 92–95 (AAPA), 98–101 (AAPA), and 123–126 (AAPA).

Functionally, component of the cuticle of migratory locust which contains more than 100 different structural proteins. The chain is Cuticle protein 65 from Locusta migratoria (Migratory locust).